We begin with the raw amino-acid sequence, 248 residues long: Ribosomal RNA small subunit methyltransferase J (248 aa).

Residues arginine 97–aspartate 98, glutamate 113–arginine 114, and aspartate 167 each bind S-adenosyl-L-methionine.

The protein belongs to the methyltransferase superfamily. RsmJ family.

It localises to the cytoplasm. The enzyme catalyses guanosine(1516) in 16S rRNA + S-adenosyl-L-methionine = N(2)-methylguanosine(1516) in 16S rRNA + S-adenosyl-L-homocysteine + H(+). Functionally, specifically methylates the guanosine in position 1516 of 16S rRNA. This Aeromonas hydrophila subsp. hydrophila (strain ATCC 7966 / DSM 30187 / BCRC 13018 / CCUG 14551 / JCM 1027 / KCTC 2358 / NCIMB 9240 / NCTC 8049) protein is Ribosomal RNA small subunit methyltransferase J.